Here is a 181-residue protein sequence, read N- to C-terminus: Macro domain-containing protein in sno 5'region (181 aa).

The 172-residue stretch at 1-172 (MTTITLVQGD…TFARELGDAG (172 aa)) folds into the Macro domain.

The protein belongs to the MacroD-type family.

This chain is Macro domain-containing protein in sno 5'region, found in Streptomyces nogalater.